A 231-amino-acid polypeptide reads, in one-letter code: Probable glutathione S-transferase (231 aa).

Positions 4–96 (PNFELYGYFR…YLEEALPTNA (93 aa)) constitute a GST N-terminal domain. Glutathione contacts are provided by residues Ser14, Gln43, Val57, 80–81 (QS), Gln124, and 128–130 (NLK). Positions 105 to 227 (NPVARAHVRT…HWQKQEDTPE (123 aa)) constitute a GST C-terminal domain.

The protein belongs to the GST superfamily. Zeta family. In terms of assembly, homodimer.

The catalysed reaction is RX + glutathione = an S-substituted glutathione + a halide anion + H(+). Probable glutathione S-transferase. In Coccidioides immitis (strain RS) (Valley fever fungus), this protein is Probable glutathione S-transferase.